A 160-amino-acid polypeptide reads, in one-letter code: Putative NrdI-like protein (160 aa).

It belongs to the NrdI family.

This is Putative NrdI-like protein from Streptococcus pyogenes serotype M3 (strain ATCC BAA-595 / MGAS315).